Here is a 64-residue protein sequence, read N- to C-terminus: Disintegrin VB7B (64 aa).

The region spanning 1–64 (ELLQNSGNPC…TGISSDCPRN (64 aa)) is the Disintegrin domain. Cystine bridges form between Cys-10–Cys-33, Cys-24–Cys-30, Cys-29–Cys-54, and Cys-42–Cys-61. A Cell attachment site; atypical (KGD) motif is present at residues 46–48 (KGD).

Belongs to the venom metalloproteinase (M12B) family. P-II subfamily. P-IIe sub-subfamily. As to quaternary structure, heterodimer with VB7A; disulfide-linked. As to expression, expressed by the venom gland.

The protein resides in the secreted. Its function is as follows. Poor inhibitor of platelet aggregation. The disintegrin inhibits the adhesion of cells expressing the RGD-dependent integrin alpha-5/beta-1 (ITGA5/ITGB1) to immobilized fibronectin. Inhibition on alpha-IIb/beta-3 (ITGA2B/ITGB3) is low. This chain is Disintegrin VB7B, found in Vipera berus berus (Common viper).